We begin with the raw amino-acid sequence, 458 residues long: ATP synthase subunit beta (458 aa).

147–154 (GGAGVGKT) is an ATP binding site.

It belongs to the ATPase alpha/beta chains family. In terms of assembly, F-type ATPases have 2 components, CF(1) - the catalytic core - and CF(0) - the membrane proton channel. CF(1) has five subunits: alpha(3), beta(3), gamma(1), delta(1), epsilon(1). CF(0) has three main subunits: a(1), b(2) and c(9-12). The alpha and beta chains form an alternating ring which encloses part of the gamma chain. CF(1) is attached to CF(0) by a central stalk formed by the gamma and epsilon chains, while a peripheral stalk is formed by the delta and b chains.

It localises to the cell inner membrane. The catalysed reaction is ATP + H2O + 4 H(+)(in) = ADP + phosphate + 5 H(+)(out). In terms of biological role, produces ATP from ADP in the presence of a proton gradient across the membrane. The catalytic sites are hosted primarily by the beta subunits. The sequence is that of ATP synthase subunit beta from Chromohalobacter salexigens (strain ATCC BAA-138 / DSM 3043 / CIP 106854 / NCIMB 13768 / 1H11).